The chain runs to 735 residues: MKTPKTVPEVKLSWEISADEITAILAGSHSNPFAVLGVHQAGDAFVARCFIPGAEEVTAMTLDGGVIGELKQLHADGVFAGPVSLTKLQPVRYRARRGDAEWAVTDPYSFGPVLGPMDDYFAREGSHLRLFDKMGAHLIKHDGAQGIHFAVWAPNAQRVSVVGDFNNWDGRRHVMRFRSDSGIWEIFAPDVPIGVAYKFEIRGQDGVLLPLKADPFARRSELRPKTASVTAAELEQEWEDEAHLKHWRETDKRRQPISIYEVHAASWQRRQDGTMLSWDELASSLIPYCADMGFTHIEFLPITEYPYDPSWGYQTTGLYAPTARFGEPEGFARFVNGCHKVGIGVILDWVPAHFPTDEHGLGWFDGTALYEHEDPRKGFHPDWSTAIYNFGRTEVVSYLVNNALYWAEKFHLDGLRVDAVASMLYLDYSRKHGEWIPNEYGGNENLEAVRFLQDLNIRIYGKNSNVMTIAEESTSWPKVSQPVHEGGLGFGFKWNMGFMHDTLSYMSRDPIYRGHHHNELTFGLLYAYSENFVLPLSHDEVVHGKGSLIAKMPGDDWQKFANLRAYYAYMWGYPGKKLLFMGQEFAQWSEWSEEKALDWNLLQYRMHEGMRRLVRDLNFTYRSKPALHARDCEGEGFEWLVADDHQNSVFAWLRKAPGQKPVAVITNFTPIYRENYSIRLPSAGRWREILNTDADIYGGSGKGNGGRVQAVDAGGNITCSITLPPLATIMLEPEN.

The active-site Nucleophile is the Asp-418. Glu-471 acts as the Proton donor in catalysis.

The protein belongs to the glycosyl hydrolase 13 family. GlgB subfamily. Monomer.

The catalysed reaction is Transfers a segment of a (1-&gt;4)-alpha-D-glucan chain to a primary hydroxy group in a similar glucan chain.. It participates in glycan biosynthesis; glycogen biosynthesis. Catalyzes the formation of the alpha-1,6-glucosidic linkages in glycogen by scission of a 1,4-alpha-linked oligosaccharide from growing alpha-1,4-glucan chains and the subsequent attachment of the oligosaccharide to the alpha-1,6 position. The polypeptide is 1,4-alpha-glucan branching enzyme GlgB 1 (Rhizobium johnstonii (strain DSM 114642 / LMG 32736 / 3841) (Rhizobium leguminosarum bv. viciae)).